The following is a 137-amino-acid chain: Fluoride-specific ion channel FluC 1 (137 aa).

The next 4 membrane-spanning stretches (helical) occupy residues Leu4–Gly24, Leu37–Ile57, Ile62–Phe82, and Ile100–Tyr120. The Na(+) site is built by Gly77 and Thr80.

This sequence belongs to the fluoride channel Fluc/FEX (TC 1.A.43) family.

It localises to the cell membrane. It catalyses the reaction fluoride(in) = fluoride(out). Na(+) is not transported, but it plays an essential structural role and its presence is essential for fluoride channel function. Fluoride-specific ion channel. Important for reducing fluoride concentration in the cell, thus reducing its toxicity. This Bacillus cereus (strain ATCC 10987 / NRS 248) protein is Fluoride-specific ion channel FluC 1.